A 222-amino-acid polypeptide reads, in one-letter code: MSKKLANFAQKRWISCSSNSFNMYDPRVFREPVSNVQELRKPLDVDDERNFLFLKAMKSDATPVFYRDSVIDKLIRVCTKDGEKETSRKNVLSALEIIKRRQYKAWTKANDEEKKSIELDPFVIARKGIKNCHPLMKLQGVTRGGTTYQVPFPIEEPEAEFRAMKMMRDICRVRAKHGETHFKDILATELLAASQNEGSTITAKQELHKTCEANRAYAHYRA.

The N-terminal 14 residues, 1-14 (MSKKLANFAQKRWI), are a transit peptide targeting the mitochondrion.

The protein belongs to the universal ribosomal protein uS7 family. As to quaternary structure, component of the mitochondrial ribosome small subunit (28S) which comprises a 12S rRNA and about 30 distinct proteins.

The protein localises to the mitochondrion. The chain is Small ribosomal subunit protein uS7m (mrps-7) from Caenorhabditis briggsae.